Reading from the N-terminus, the 77-residue chain is Secapin (77 aa).

An N-terminal signal peptide occupies residues 1-32; sequence MKNYSKNATHLITVLLFSFVVILLIIPSKCEA. Residues 33–52 constitute a propeptide that is removed on maturation; sequence VSNDMQPLEARSADLVPEPR. Residues cysteine 61 and cysteine 72 are joined by a disulfide bond.

It belongs to the secapin family. Expressed by the venom gland.

It is found in the secreted. Serine protease inhibitor which exhibits antifibrinolytic, antielastolytic and antimicrobial activities. Displays antimicrobial activity against bacteria and fungi. Likely functions in the innate immune response to microbial infection and possibly in the venom, as an antifibrinolytic agent. Not toxic to mice but does induce slight sedation at higher doses (from 40 mg/kg). At a dose of 80 mg/kg, sedation occurs 15 minutes after injection and is accompanied by piloerection and hypothermia. This Apis mellifera (Honeybee) protein is Secapin.